A 452-amino-acid chain; its full sequence is THO complex subunit 5A (452 aa).

The protein belongs to the THOC5 family. In terms of assembly, component of the THO complex, which is composed of THO1, THO2, THO3, THO5, THO6 and THO7.

The protein localises to the nucleus. Acts as a component of the THO subcomplex of the TREX complex which is thought to couple mRNA transcription, processing and nuclear export. The chain is THO complex subunit 5A (THO5A) from Arabidopsis thaliana (Mouse-ear cress).